The primary structure comprises 286 residues: Transcription factor bHLH11 (286 aa).

Residues 1 to 34 (MDQPMKPKTCSESDFADDSSASSSSSSGQNLRGA) are disordered. Over residues 18–27 (DSSASSSSSS) the composition is skewed to low complexity. A bHLH domain is found at 44–94 (AVCSQKAEREKLRRDKLKEQFLELGNALDPNRPKSDKASVLTDTIQMLKDV). Disordered stretches follow at residues 182–202 (EQQASVQQHSSSSADASMKQD) and 244–286 (QQDV…MLKP). 2 stretches are compositionally biased toward low complexity: residues 183–198 (QQASVQQHSSSSADAS) and 255–269 (SLTTTASSSNSYSLS). Residues 270–279 (QAVQDSSPGT) show a composition bias toward polar residues.

As to quaternary structure, homodimer. Expressed consitutively in roots, leaves, stems, and flowers.

The protein resides in the nucleus. In Arabidopsis thaliana (Mouse-ear cress), this protein is Transcription factor bHLH11 (BHLH11).